The following is a 457-amino-acid chain: UDP-N-acetylmuramoyl-tripeptide--D-alanyl-D-alanine ligase (457 aa).

Residue 113–119 (GSNGKTT) coordinates ATP.

This sequence belongs to the MurCDEF family. MurF subfamily.

The protein resides in the cytoplasm. The enzyme catalyses D-alanyl-D-alanine + UDP-N-acetyl-alpha-D-muramoyl-L-alanyl-gamma-D-glutamyl-meso-2,6-diaminopimelate + ATP = UDP-N-acetyl-alpha-D-muramoyl-L-alanyl-gamma-D-glutamyl-meso-2,6-diaminopimeloyl-D-alanyl-D-alanine + ADP + phosphate + H(+). The protein operates within cell wall biogenesis; peptidoglycan biosynthesis. Functionally, involved in cell wall formation. Catalyzes the final step in the synthesis of UDP-N-acetylmuramoyl-pentapeptide, the precursor of murein. This chain is UDP-N-acetylmuramoyl-tripeptide--D-alanyl-D-alanine ligase, found in Bacillus subtilis (strain 168).